The sequence spans 258 residues: Indole-3-glycerol phosphate synthase (258 aa).

The protein belongs to the TrpC family.

It catalyses the reaction 1-(2-carboxyphenylamino)-1-deoxy-D-ribulose 5-phosphate + H(+) = (1S,2R)-1-C-(indol-3-yl)glycerol 3-phosphate + CO2 + H2O. Its pathway is amino-acid biosynthesis; L-tryptophan biosynthesis; L-tryptophan from chorismate: step 4/5. The chain is Indole-3-glycerol phosphate synthase from Chlorobium limicola (strain DSM 245 / NBRC 103803 / 6330).